Here is a 317-residue protein sequence, read N- to C-terminus: Transaldolase (317 aa).

Lys-126 acts as the Schiff-base intermediate with substrate in catalysis.

This sequence belongs to the transaldolase family. Type 1 subfamily. As to quaternary structure, homodimer.

Its subcellular location is the cytoplasm. The enzyme catalyses D-sedoheptulose 7-phosphate + D-glyceraldehyde 3-phosphate = D-erythrose 4-phosphate + beta-D-fructose 6-phosphate. Its pathway is carbohydrate degradation; pentose phosphate pathway; D-glyceraldehyde 3-phosphate and beta-D-fructose 6-phosphate from D-ribose 5-phosphate and D-xylulose 5-phosphate (non-oxidative stage): step 2/3. Functionally, transaldolase is important for the balance of metabolites in the pentose-phosphate pathway. The protein is Transaldolase of Paraburkholderia phytofirmans (strain DSM 17436 / LMG 22146 / PsJN) (Burkholderia phytofirmans).